Here is a 298-residue protein sequence, read N- to C-terminus: Protoheme IX farnesyltransferase (298 aa).

A run of 8 helical transmembrane segments spans residues 24-44 (VVSL…PAWP), 46-66 (WTTI…AAAF), 97-117 (LVFA…VVNP), 118-138 (LTMW…TVLL), 146-166 (IVIG…AATG), 172-192 (ALLL…ALAL), 231-251 (LLPV…VLLG), and 278-298 (IWYL…PIPV).

The protein belongs to the UbiA prenyltransferase family. Protoheme IX farnesyltransferase subfamily.

The protein localises to the cell inner membrane. It catalyses the reaction heme b + (2E,6E)-farnesyl diphosphate + H2O = Fe(II)-heme o + diphosphate. It functions in the pathway porphyrin-containing compound metabolism; heme O biosynthesis; heme O from protoheme: step 1/1. In terms of biological role, converts heme B (protoheme IX) to heme O by substitution of the vinyl group on carbon 2 of heme B porphyrin ring with a hydroxyethyl farnesyl side group. The polypeptide is Protoheme IX farnesyltransferase (Thiobacillus denitrificans (strain ATCC 25259 / T1)).